We begin with the raw amino-acid sequence, 108 residues long: Protein YcgL (108 aa).

A YcgL domain is found at Met-12–Leu-96.

This Shigella sonnei (strain Ss046) protein is Protein YcgL.